Consider the following 84-residue polypeptide: Acetylcholine receptor subunit alpha (84 aa).

2 disulfides stabilise this stretch: cysteine 7/cysteine 21 and cysteine 71/cysteine 72. Asparagine 20 carries N-linked (GlcNAc...) asparagine glycosylation.

This sequence belongs to the ligand-gated ion channel (TC 1.A.9) family. Acetylcholine receptor (TC 1.A.9.1) subfamily. Alpha-1/CHRNA1 sub-subfamily. One of the alpha chains that assemble within the acetylcholine receptor, a pentamer of two alpha chains, a beta, a delta, and a gamma (in immature muscle) or epsilon (in mature muscle) chains. The muscle heteropentamer composed of alpha-1, beta-1, delta, epsilon subunits interacts with the alpha-conotoxin ImII.

The protein resides in the postsynaptic cell membrane. The protein localises to the cell membrane. The catalysed reaction is K(+)(in) = K(+)(out). The enzyme catalyses Na(+)(in) = Na(+)(out). Its function is as follows. Upon acetylcholine binding, the AChR responds by an extensive change in conformation that affects all subunits and leads to opening of an ion-conducting channel across the plasma membrane. The protein is Acetylcholine receptor subunit alpha (CHRNA1) of Crocidura russula (Greater white-toothed shrew).